A 583-amino-acid chain; its full sequence is MVSDRSCIGYLRSVIAGSVDTHTGHECTITNHAAEEGGGTAAAAAVKVMTVSGSGKRGRYVRQVTGRHNDTDLHVAARGGDAGALRRALDEAAAAVATGEGREALEEVRRAVAAEPNEAGETPLVAAAERGHLEVVRELLRHLDAEGVAAKNRSGYDALHVAAREGRHAVVQEMLLHNRLLAKTFGPANTSPLISAATRGHTEVVKLLLELDDFGLVEMAKDNGKNSLHFAARQGHVEIVKALLEKDPQLARRNDKKGQTALHMAVKGTNCDVLRALVDADPAIVMLPDKNGNTALHVATRKKRAEIVAVLLRLPDTHVNALTRDHKTAYDIAEALPLCEESSEIKDILSQHGALRSRELNQPRDELRKTVTEIKKDVHTQLEQTRKTNKNVHGIAKELRKLHREGINNATNSVTVVAVLFATVAFAAIFTVPGGNANNGVAVVVQAASFRIFFIFNAIALFTSLAVVVVQITVVRGETKSERKVVEVINKLMWLASVCTTISFIASCYIVLGRHFQWAALLVSLIGGITMAGVLGTMTYYVVKSKRMRKIRKKEKMSRRSGSSSWYDNTELSETELNQVYAL.

ANK repeat units follow at residues histidine 68–alanine 97, alanine 119–valine 148, serine 154–lysine 183, alanine 188–glutamate 218, asparagine 223–arginine 252, lysine 257–methionine 286, and asparagine 291–alanine 321. A run of 4 helical transmembrane segments spans residues valine 414 to glycine 434, isoleucine 452 to isoleucine 472, leucine 492 to leucine 512, and tryptophan 518 to methionine 538.

It localises to the cell membrane. Its function is as follows. Involved in salt stress tolerance. This is Ankyrin repeat-containing protein NPR4 from Oryza sativa subsp. japonica (Rice).